Consider the following 212-residue polypeptide: Large ribosomal subunit protein uL3 (212 aa).

Belongs to the universal ribosomal protein uL3 family. Part of the 50S ribosomal subunit. Forms a cluster with proteins L14 and L19.

One of the primary rRNA binding proteins, it binds directly near the 3'-end of the 23S rRNA, where it nucleates assembly of the 50S subunit. The protein is Large ribosomal subunit protein uL3 of Ruminiclostridium cellulolyticum (strain ATCC 35319 / DSM 5812 / JCM 6584 / H10) (Clostridium cellulolyticum).